A 459-amino-acid polypeptide reads, in one-letter code: Glutamyl-tRNA reductase (459 aa).

Substrate is bound by residues 49–52 (TCNR), S109, 114–116 (EQQ), and Q120. Catalysis depends on C50, which acts as the Nucleophile. 189–194 (GAGAMG) contributes to the NADP(+) binding site.

This sequence belongs to the glutamyl-tRNA reductase family. In terms of assembly, homodimer.

It carries out the reaction (S)-4-amino-5-oxopentanoate + tRNA(Glu) + NADP(+) = L-glutamyl-tRNA(Glu) + NADPH + H(+). It functions in the pathway porphyrin-containing compound metabolism; protoporphyrin-IX biosynthesis; 5-aminolevulinate from L-glutamyl-tRNA(Glu): step 1/2. Functionally, catalyzes the NADPH-dependent reduction of glutamyl-tRNA(Glu) to glutamate 1-semialdehyde (GSA). The protein is Glutamyl-tRNA reductase of Mycolicibacterium paratuberculosis (strain ATCC BAA-968 / K-10) (Mycobacterium paratuberculosis).